The chain runs to 458 residues: Nuclear transcription factor Y subunit gamma (458 aa).

Residues 305–315 (QQQFSQFTDGQ) show a composition bias toward low complexity. The tract at residues 305-379 (QQQFSQFTDG…QQSSTSPPPS (75 aa)) is disordered. Polar residues predominate over residues 339–351 (TGNSTPCTSSLPT).

It belongs to the NFYC/HAP5 subunit family. In terms of assembly, heterotrimeric transcription factor composed of three components, NF-YA, NF-YB and NF-YC. NF-YB and NF-YC must interact and dimerize for NF-YA association and DNA binding.

It is found in the nucleus. In terms of biological role, component of the sequence-specific heterotrimeric transcription factor (NF-Y) which specifically recognizes a 5'-CCAAT-3' box motif found in the promoters of its target genes. NF-Y can function as both an activator and a repressor, depending on its interacting cofactors. The chain is Nuclear transcription factor Y subunit gamma (NFYC) from Homo sapiens (Human).